A 177-amino-acid chain; its full sequence is Large ribosomal subunit protein uL6 (177 aa).

This sequence belongs to the universal ribosomal protein uL6 family. Part of the 50S ribosomal subunit.

Its function is as follows. This protein binds to the 23S rRNA, and is important in its secondary structure. It is located near the subunit interface in the base of the L7/L12 stalk, and near the tRNA binding site of the peptidyltransferase center. This chain is Large ribosomal subunit protein uL6, found in Nitrosospira multiformis (strain ATCC 25196 / NCIMB 11849 / C 71).